We begin with the raw amino-acid sequence, 338 residues long: Ketol-acid reductoisomerase (NADP(+)) (338 aa).

The KARI N-terminal Rossmann domain maps to 3-183 (IELLYDADAD…GGARAGVIPT (181 aa)). NADP(+) is bound by residues 26 to 29 (YGSQ), arginine 49, serine 52, serine 54, and 84 to 87 (DTSQ). Residue histidine 109 is part of the active site. Glycine 135 contributes to the NADP(+) binding site. A KARI C-terminal knotted domain is found at 184-329 (TFEAETVTDL…AKLRDLMSWV (146 aa)). The Mg(2+) site is built by aspartate 192, glutamate 196, glutamate 228, and glutamate 232. Position 253 (serine 253) interacts with substrate.

This sequence belongs to the ketol-acid reductoisomerase family. The cofactor is Mg(2+).

The enzyme catalyses (2R)-2,3-dihydroxy-3-methylbutanoate + NADP(+) = (2S)-2-acetolactate + NADPH + H(+). It carries out the reaction (2R,3R)-2,3-dihydroxy-3-methylpentanoate + NADP(+) = (S)-2-ethyl-2-hydroxy-3-oxobutanoate + NADPH + H(+). The protein operates within amino-acid biosynthesis; L-isoleucine biosynthesis; L-isoleucine from 2-oxobutanoate: step 2/4. It functions in the pathway amino-acid biosynthesis; L-valine biosynthesis; L-valine from pyruvate: step 2/4. Its function is as follows. Involved in the biosynthesis of branched-chain amino acids (BCAA). Catalyzes an alkyl-migration followed by a ketol-acid reduction of (S)-2-acetolactate (S2AL) to yield (R)-2,3-dihydroxy-isovalerate. In the isomerase reaction, S2AL is rearranged via a Mg-dependent methyl migration to produce 3-hydroxy-3-methyl-2-ketobutyrate (HMKB). In the reductase reaction, this 2-ketoacid undergoes a metal-dependent reduction by NADPH to yield (R)-2,3-dihydroxy-isovalerate. The polypeptide is Ketol-acid reductoisomerase (NADP(+)) (Corynebacterium glutamicum (strain ATCC 13032 / DSM 20300 / JCM 1318 / BCRC 11384 / CCUG 27702 / LMG 3730 / NBRC 12168 / NCIMB 10025 / NRRL B-2784 / 534)).